Reading from the N-terminus, the 257-residue chain is Small ribosomal subunit protein uS2 (257 aa).

The disordered stretch occupies residues 237-257 (MDEADGSEAEPEDPAAPESAE). Positions 240–257 (ADGSEAEPEDPAAPESAE) are enriched in acidic residues.

It belongs to the universal ribosomal protein uS2 family.

In Chlorobium phaeovibrioides (strain DSM 265 / 1930) (Prosthecochloris vibrioformis (strain DSM 265)), this protein is Small ribosomal subunit protein uS2.